A 188-amino-acid chain; its full sequence is ATP synthase subunit b (188 aa).

The chain crosses the membrane as a helical span at residues 7-26 (TAAAGAMTLFFASMAYASGD).

The protein belongs to the ATPase B chain family. As to quaternary structure, F-type ATPases have 2 components, F(1) - the catalytic core - and F(0) - the membrane proton channel. F(1) has five subunits: alpha(3), beta(3), gamma(1), delta(1), epsilon(1). F(0) has three main subunits: a(1), b(2) and c(10-14). The alpha and beta chains form an alternating ring which encloses part of the gamma chain. F(1) is attached to F(0) by a central stalk formed by the gamma and epsilon chains, while a peripheral stalk is formed by the delta and b chains.

It localises to the cell inner membrane. Functionally, f(1)F(0) ATP synthase produces ATP from ADP in the presence of a proton or sodium gradient. F-type ATPases consist of two structural domains, F(1) containing the extramembraneous catalytic core and F(0) containing the membrane proton channel, linked together by a central stalk and a peripheral stalk. During catalysis, ATP synthesis in the catalytic domain of F(1) is coupled via a rotary mechanism of the central stalk subunits to proton translocation. Component of the F(0) channel, it forms part of the peripheral stalk, linking F(1) to F(0). This Nitratidesulfovibrio vulgaris (strain DP4) (Desulfovibrio vulgaris) protein is ATP synthase subunit b.